A 437-amino-acid chain; its full sequence is Protein translocase subunit SecY (437 aa).

The next 10 helical transmembrane spans lie at 19–39 (LFTL…IPGV), 69–89 (LLQI…SIIL), 122–142 (VALA…GALF), 157–177 (IFTT…VMWL), 189–209 (GMSI…LWAI), 219–239 (WIEF…VVFV), 275–295 (GVIP…IVQF), 318–338 (HIIL…AISF), 378–398 (GSLY…GFGA), and 400–420 (QNFP…LETV).

This sequence belongs to the SecY/SEC61-alpha family. Component of the Sec protein translocase complex. Heterotrimer consisting of SecY, SecE and SecG subunits. The heterotrimers can form oligomers, although 1 heterotrimer is thought to be able to translocate proteins. Interacts with the ribosome. Interacts with SecDF, and other proteins may be involved. Interacts with SecA.

It is found in the cell membrane. Its function is as follows. The central subunit of the protein translocation channel SecYEG. Consists of two halves formed by TMs 1-5 and 6-10. These two domains form a lateral gate at the front which open onto the bilayer between TMs 2 and 7, and are clamped together by SecE at the back. The channel is closed by both a pore ring composed of hydrophobic SecY resides and a short helix (helix 2A) on the extracellular side of the membrane which forms a plug. The plug probably moves laterally to allow the channel to open. The ring and the pore may move independently. This Streptomyces lividans protein is Protein translocase subunit SecY.